A 642-amino-acid chain; its full sequence is Chaperone protein DnaK (642 aa).

T198 is modified (phosphothreonine; by autocatalysis). The span at 578–589 (DDKEAIESRMQK) shows a compositional bias: basic and acidic residues. The segment at 578 to 642 (DDKEAIESRM…FEEVKDGDKK (65 aa)) is disordered. Residues 603–619 (AEQAAQQGGDAGAQAED) are compositionally biased toward low complexity.

The protein belongs to the heat shock protein 70 family.

Functionally, acts as a chaperone. This is Chaperone protein DnaK from Hahella chejuensis (strain KCTC 2396).